The sequence spans 223 residues: Ribose-5-phosphate isomerase A (223 aa).

Substrate contacts are provided by residues T28 to T31, D81 to D84, and K94 to G97. E103 acts as the Proton acceptor in catalysis. K121 lines the substrate pocket.

It belongs to the ribose 5-phosphate isomerase family. As to quaternary structure, homodimer.

It carries out the reaction aldehydo-D-ribose 5-phosphate = D-ribulose 5-phosphate. Its pathway is carbohydrate degradation; pentose phosphate pathway; D-ribose 5-phosphate from D-ribulose 5-phosphate (non-oxidative stage): step 1/1. Catalyzes the reversible conversion of ribose-5-phosphate to ribulose 5-phosphate. This chain is Ribose-5-phosphate isomerase A, found in Ruthia magnifica subsp. Calyptogena magnifica.